The following is a 244-amino-acid chain: INO80 complex subunit E (244 aa).

The stretch at D10–L54 forms a coiled coil. 2 disordered regions span residues Q59–F187 and F222–E244. Low complexity-rich tracts occupy residues P99–S115 and A122–P136. The segment covering R157–K171 has biased composition (basic residues). Glycyl lysine isopeptide (Lys-Gly) (interchain with G-Cter in SUMO2) cross-links involve residues K159 and K171. Positions D230–E244 are enriched in acidic residues.

As to quaternary structure, component of the chromatin remodeling INO80 complex; specifically part of a complex module associated with the N-terminus of INO80.

It localises to the nucleus. Its function is as follows. Putative regulatory component of the chromatin remodeling INO80 complex which is involved in transcriptional regulation, DNA replication and probably DNA repair. In Bos taurus (Bovine), this protein is INO80 complex subunit E (INO80E).